The following is a 499-amino-acid chain: Aspartyl/glutamyl-tRNA(Asn/Gln) amidotransferase subunit B (499 aa).

This sequence belongs to the GatB/GatE family. GatB subfamily. In terms of assembly, heterotrimer of A, B and C subunits.

It carries out the reaction L-glutamyl-tRNA(Gln) + L-glutamine + ATP + H2O = L-glutaminyl-tRNA(Gln) + L-glutamate + ADP + phosphate + H(+). The enzyme catalyses L-aspartyl-tRNA(Asn) + L-glutamine + ATP + H2O = L-asparaginyl-tRNA(Asn) + L-glutamate + ADP + phosphate + 2 H(+). Its function is as follows. Allows the formation of correctly charged Asn-tRNA(Asn) or Gln-tRNA(Gln) through the transamidation of misacylated Asp-tRNA(Asn) or Glu-tRNA(Gln) in organisms which lack either or both of asparaginyl-tRNA or glutaminyl-tRNA synthetases. The reaction takes place in the presence of glutamine and ATP through an activated phospho-Asp-tRNA(Asn) or phospho-Glu-tRNA(Gln). The chain is Aspartyl/glutamyl-tRNA(Asn/Gln) amidotransferase subunit B from Bifidobacterium animalis subsp. lactis (strain AD011).